The following is a 186-amino-acid chain: Threonylcarbamoyl-AMP synthase (186 aa).

The YrdC-like domain occupies 2-186 (PNEFELAVAA…ARTGAIIRPS (185 aa)).

The protein belongs to the SUA5 family. TsaC subfamily.

The protein localises to the cytoplasm. The enzyme catalyses L-threonine + hydrogencarbonate + ATP = L-threonylcarbamoyladenylate + diphosphate + H2O. Functionally, required for the formation of a threonylcarbamoyl group on adenosine at position 37 (t(6)A37) in tRNAs that read codons beginning with adenine. Catalyzes the conversion of L-threonine, HCO(3)(-)/CO(2) and ATP to give threonylcarbamoyl-AMP (TC-AMP) as the acyladenylate intermediate, with the release of diphosphate. The protein is Threonylcarbamoyl-AMP synthase of Aeromonas hydrophila subsp. hydrophila (strain ATCC 7966 / DSM 30187 / BCRC 13018 / CCUG 14551 / JCM 1027 / KCTC 2358 / NCIMB 9240 / NCTC 8049).